A 358-amino-acid chain; its full sequence is Alanine racemase (358 aa).

Residue Lys35 is the Proton acceptor; specific for D-alanine of the active site. Lys35 carries the post-translational modification N6-(pyridoxal phosphate)lysine. Arg130 provides a ligand contact to substrate. The active-site Proton acceptor; specific for L-alanine is Tyr255. Met303 serves as a coordination point for substrate.

The protein belongs to the alanine racemase family. The cofactor is pyridoxal 5'-phosphate.

It carries out the reaction L-alanine = D-alanine. Its pathway is amino-acid biosynthesis; D-alanine biosynthesis; D-alanine from L-alanine: step 1/1. Functionally, catalyzes the interconversion of L-alanine and D-alanine. May also act on other amino acids. This Shewanella sp. (strain MR-7) protein is Alanine racemase (alr).